Consider the following 139-residue polypeptide: TDP-4-oxo-6-deoxy-alpha-D-glucose-3,4-oxoisomerase (139 aa).

The active-site Proton acceptor is the H49.

In terms of assembly, homodimer.

The enzyme catalyses dTDP-4-dehydro-6-deoxy-alpha-D-glucose = dTDP-3-dehydro-6-deoxy-alpha-D-galactose. Mediates the isomerization of dTDP-6-deoxy-D-xylohex-4-ulose into dTDP-6-deoxy-D-xylohex-3-ulose in the biosynthesis of dTDP-3-acetamido-3,6-dideoxy-alpha-D-galactose, a glycan chain of the S-layer. The polypeptide is TDP-4-oxo-6-deoxy-alpha-D-glucose-3,4-oxoisomerase (fdtA) (Aneurinibacillus thermoaerophilus).